A 272-amino-acid chain; its full sequence is Putative phosphoenolpyruvate synthase regulatory protein (272 aa).

152 to 159 (GVSRSGKT) is an ADP binding site.

This sequence belongs to the pyruvate, phosphate/water dikinase regulatory protein family. PSRP subfamily.

It carries out the reaction [pyruvate, water dikinase] + ADP = [pyruvate, water dikinase]-phosphate + AMP + H(+). The catalysed reaction is [pyruvate, water dikinase]-phosphate + phosphate + H(+) = [pyruvate, water dikinase] + diphosphate. Bifunctional serine/threonine kinase and phosphorylase involved in the regulation of the phosphoenolpyruvate synthase (PEPS) by catalyzing its phosphorylation/dephosphorylation. The protein is Putative phosphoenolpyruvate synthase regulatory protein of Methylibium petroleiphilum (strain ATCC BAA-1232 / LMG 22953 / PM1).